The chain runs to 141 residues: Nucleoside diphosphate kinase (141 aa).

6 residues coordinate ATP: K10, F58, R86, T92, R103, and N113. Catalysis depends on H116, which acts as the Pros-phosphohistidine intermediate.

The protein belongs to the NDK family. As to quaternary structure, homotetramer. Requires Mg(2+) as cofactor.

The protein localises to the cytoplasm. It catalyses the reaction a 2'-deoxyribonucleoside 5'-diphosphate + ATP = a 2'-deoxyribonucleoside 5'-triphosphate + ADP. It carries out the reaction a ribonucleoside 5'-diphosphate + ATP = a ribonucleoside 5'-triphosphate + ADP. Its function is as follows. Major role in the synthesis of nucleoside triphosphates other than ATP. The ATP gamma phosphate is transferred to the NDP beta phosphate via a ping-pong mechanism, using a phosphorylated active-site intermediate. This chain is Nucleoside diphosphate kinase, found in Hydrogenovibrio crunogenus (strain DSM 25203 / XCL-2) (Thiomicrospira crunogena).